The chain runs to 159 residues: Large ribosomal subunit protein uL11 (159 aa).

Residues 137–149 (EGKDPREVQREVD) are compositionally biased toward basic and acidic residues. The interval 137–159 (EGKDPREVQREVDSGAWDKLLGG) is disordered.

It belongs to the universal ribosomal protein uL11 family. Part of the ribosomal stalk of the 50S ribosomal subunit. Interacts with L10 and the large rRNA to form the base of the stalk. L10 forms an elongated spine to which L12 dimers bind in a sequential fashion forming a multimeric L10(L12)X complex.

Forms part of the ribosomal stalk which helps the ribosome interact with GTP-bound translation factors. This is Large ribosomal subunit protein uL11 from Korarchaeum cryptofilum (strain OPF8).